The chain runs to 564 residues: Dicarboxylate transporter 2, chloroplastic (564 aa).

The N-terminal 22 residues, 1–22 (MESLALLPTLSLSTTTTTSKAT), are a transit peptide targeting the chloroplast. The tract at residues 35-58 (RRPHLSLSLSSTPKPTLTFSSHSH) is disordered. The span at 39 to 58 (LSLSLSSTPKPTLTFSSHSH) shows a compositional bias: low complexity. 12 helical membrane-spanning segments follow: residues 94-114 (GAKL…RFAV), 127-147 (LLAI…PVGA), 166-186 (TAFC…FFFA), 235-255 (AGGI…SLPG), 262-282 (LGTY…ALFL), 307-327 (VFWL…TPLI), 356-376 (VTKN…LWVF), 380-400 (IGVS…LLGV), 415-435 (TLAW…LGIV), 451-471 (LSWP…HYLF), 484-504 (AFLA…LALA), and 538-558 (MGFI…GVWW).

It belongs to the SLC13A/DASS transporter (TC 2.A.47) family. DIT1 subfamily. In terms of tissue distribution, expressed in leaves.

Its subcellular location is the plastid. The protein localises to the chloroplast inner membrane. Glutamate/malate translocator involved with DIT1 in primary ammonia assimilation and in the re-assimilation of ammonia generated by the photorespiratory pathway. Exports the end product of ammonia assimilation, glutamate, from plastids to the cytosol. The precursor for ammonia assimilation, 2-oxoglutarate, is imported from the cytosol by DIT1. This chain is Dicarboxylate transporter 2, chloroplastic (DIT2), found in Spinacia oleracea (Spinach).